Reading from the N-terminus, the 347-residue chain is Melatonin receptor type 1B-B (347 aa).

The Extracellular portion of the chain corresponds to 1–36 (MPENIAFLTNSTDLGHVGRALGSSARPAWAIAVLAS). N10 carries an N-linked (GlcNAc...) asparagine glycan. The helical transmembrane segment at 37-57 (VLIFTTVVDVLGNLLVIISVF) threads the bilayer. Topologically, residues 58–72 (RNRKLRNAGNVFVVS) are cytoplasmic. The chain crosses the membrane as a helical span at residues 73–93 (LAFADLVVAFYPYPLVLYAIF). The Extracellular segment spans residues 94 to 105 (HDGWSLGETQCK). Cysteines 104 and 181 form a disulfide. The chain crosses the membrane as a helical span at residues 106-126 (ISGFLMGLSVIGSVFNITGIA). Topologically, residues 127-148 (INRYCYICHSFAYGRLYSFRNT) are cytoplasmic. The helical transmembrane segment at 149–169 (LLLVALIWALTVLAILPNFFV) threads the bilayer. The Extracellular segment spans residues 170-191 (GSLSYDPRVYSCTFTQTASSSY). Residues 192 to 212 (TVVVVVVHFLVPIAVVTFCYL) traverse the membrane as a helical segment. The Cytoplasmic portion of the chain corresponds to 213–244 (RIWVLVIQVRRKVKSEERSRVRPSDLRNFVTM). A helical transmembrane segment spans residues 245–265 (FVVFVLFAICWAPLNLIGLVV). At 266–278 (AINPEVMAPRVPE) the chain is on the extracellular side. A helical membrane pass occupies residues 279 to 299 (WLFVVSYFMAYFNSCLNAIIY). Residues 300–347 (GLLNRNFRKEYVRIMTAVWIPRRFVTETSRAATDGMRSKPSPAINNNE) lie on the Cytoplasmic side of the membrane.

Belongs to the G-protein coupled receptor 1 family.

The protein resides in the cell membrane. Functionally, high affinity receptor for melatonin. The activity of this receptor is mediated by pertussis toxin sensitive G proteins that inhibits adenylate cyclase activity. This chain is Melatonin receptor type 1B-B (mtnr1bb), found in Danio rerio (Zebrafish).